We begin with the raw amino-acid sequence, 203 residues long: ATP-dependent dethiobiotin synthetase BioD (203 aa).

ATP is bound at residue 11-16 (NVGKTI). Thr-15 is a binding site for Mg(2+). Residue Lys-31 is part of the active site. Thr-35 contributes to the substrate binding site. Residues Asp-42 and 94–97 (EGAG) each bind ATP. Asp-42 and Glu-94 together coordinate Mg(2+).

It belongs to the dethiobiotin synthetase family. As to quaternary structure, homodimer. It depends on Mg(2+) as a cofactor.

It is found in the cytoplasm. The catalysed reaction is (7R,8S)-7,8-diammoniononanoate + CO2 + ATP = (4R,5S)-dethiobiotin + ADP + phosphate + 3 H(+). Its pathway is cofactor biosynthesis; biotin biosynthesis; biotin from 7,8-diaminononanoate: step 1/2. In terms of biological role, catalyzes a mechanistically unusual reaction, the ATP-dependent insertion of CO2 between the N7 and N8 nitrogen atoms of 7,8-diaminopelargonic acid (DAPA, also called 7,8-diammoniononanoate) to form a ureido ring. The sequence is that of ATP-dependent dethiobiotin synthetase BioD from Lawsonia intracellularis (strain PHE/MN1-00).